The chain runs to 289 residues: ADP-dependent (S)-NAD(P)H-hydrate dehydratase (289 aa).

One can recognise a YjeF C-terminal domain in the interval 9 to 286 (VTAAALRAQP…PEVPGILDRL (278 aa)). Ala44 and His160 together coordinate (6S)-NADPHX. AMP-binding positions include 197–201 (KGADS) and Gly226. Asp227 is a (6S)-NADPHX binding site.

This sequence belongs to the NnrD/CARKD family. As to quaternary structure, homotetramer. It depends on Mg(2+) as a cofactor.

It catalyses the reaction (6S)-NADHX + ADP = AMP + phosphate + NADH + H(+). The catalysed reaction is (6S)-NADPHX + ADP = AMP + phosphate + NADPH + H(+). In terms of biological role, catalyzes the dehydration of the S-form of NAD(P)HX at the expense of ADP, which is converted to AMP. Together with NAD(P)HX epimerase, which catalyzes the epimerization of the S- and R-forms, the enzyme allows the repair of both epimers of NAD(P)HX, a damaged form of NAD(P)H that is a result of enzymatic or heat-dependent hydration. This is ADP-dependent (S)-NAD(P)H-hydrate dehydratase from Xanthomonas campestris pv. campestris (strain ATCC 33913 / DSM 3586 / NCPPB 528 / LMG 568 / P 25).